A 243-amino-acid polypeptide reads, in one-letter code: Hydroxyacylglutathione hydrolase (243 aa).

Histidine 59, histidine 61, aspartate 63, histidine 64, histidine 117, aspartate 135, and histidine 173 together coordinate Zn(2+).

Belongs to the metallo-beta-lactamase superfamily. Glyoxalase II family. As to quaternary structure, monomer. Zn(2+) serves as cofactor.

The enzyme catalyses an S-(2-hydroxyacyl)glutathione + H2O = a 2-hydroxy carboxylate + glutathione + H(+). It participates in secondary metabolite metabolism; methylglyoxal degradation; (R)-lactate from methylglyoxal: step 2/2. Its function is as follows. Thiolesterase that catalyzes the hydrolysis of S-D-lactoyl-glutathione to form glutathione and D-lactic acid. This chain is Hydroxyacylglutathione hydrolase, found in Acidiphilium cryptum (strain JF-5).